The following is a 119-amino-acid chain: Protein TusC (119 aa).

The protein belongs to the DsrF/TusC family. As to quaternary structure, heterohexamer, formed by a dimer of trimers. The hexameric TusBCD complex contains 2 copies each of TusB, TusC and TusD. The TusBCD complex interacts with TusE.

It localises to the cytoplasm. Functionally, part of a sulfur-relay system required for 2-thiolation of 5-methylaminomethyl-2-thiouridine (mnm(5)s(2)U) at tRNA wobble positions. The protein is Protein TusC of Cronobacter sakazakii (strain ATCC BAA-894) (Enterobacter sakazakii).